We begin with the raw amino-acid sequence, 297 residues long: Formiminotransferase cyclodeaminase-like protein (297 aa).

Positions Leu2–Trp196 are formiminotransferase N-subdomain. His89 acts as the For formimidoyltransferase activity in catalysis. Gly178–Gly187 provides a ligand contact to folate.

It belongs to the formiminotransferase family. As to expression, expressed constitutively in roots, stems, leaves and flowers.

Its subcellular location is the golgi apparatus. The protein resides in the trans-Golgi network. The catalysed reaction is (6S)-5-formyl-5,6,7,8-tetrahydrofolate + L-glutamate = N-formyl-L-glutamate + (6S)-5,6,7,8-tetrahydrofolate + H(+). The enzyme catalyses 5-formimidoyltetrahydrofolate + L-glutamate = N-formimidoyl-L-glutamate + (6S)-5,6,7,8-tetrahydrofolate. The protein operates within one-carbon metabolism; tetrahydrofolate interconversion. Involved in the regulation of root growth. May regulate sorting and/or transportation of trans-Golgi network (TGN) vesicles in root cap peripheral cells, thus influencing the extracellular secretion of mucilage components in the root cap. This chain is Formiminotransferase cyclodeaminase-like protein, found in Arabidopsis thaliana (Mouse-ear cress).